The following is a 525-amino-acid chain: NADH-quinone oxidoreductase subunit N (525 aa).

14 helical membrane passes run 26–46 (LSPM…DAFA), 53–73 (VLQP…VVLL), 90–110 (PTLF…LLVA), 143–163 (VQTE…LFVA), 167–187 (LLVM…LCGL), 202–222 (YFLL…FAYG), 246–266 (LYLS…AAPF), 278–298 (PTPI…GALL), 314–334 (PVIW…ALTQ), 341–361 (LAYS…GSNI), 368–388 (MFYL…VSLV), 411–431 (LAGT…TSGF), 449–469 (LVVV…RVIV), and 487–507 (PTLT…LGVA).

This sequence belongs to the complex I subunit 2 family. NDH-1 is composed of 14 different subunits. Subunits NuoA, H, J, K, L, M, N constitute the membrane sector of the complex.

Its subcellular location is the cell membrane. The enzyme catalyses a quinone + NADH + 5 H(+)(in) = a quinol + NAD(+) + 4 H(+)(out). NDH-1 shuttles electrons from NADH, via FMN and iron-sulfur (Fe-S) centers, to quinones in the respiratory chain. The immediate electron acceptor for the enzyme in this species is believed to be a menaquinone. Couples the redox reaction to proton translocation (for every two electrons transferred, four hydrogen ions are translocated across the cytoplasmic membrane), and thus conserves the redox energy in a proton gradient. This Parafrankia sp. (strain EAN1pec) protein is NADH-quinone oxidoreductase subunit N.